We begin with the raw amino-acid sequence, 374 residues long: Resuscitation-promoting factor Rpf2 (374 aa).

The signal sequence occupies residues 1–40 (MAPHQKSRINRINSTRSVPLRLATGGVLATLLIGGVTAAA). A G5 domain is found at 210–290 (IDRVDNTEIT…PATISRGTKT (81 aa)). Residues 228 to 252 (PTYVDDPEAPAGDETVVEEGAPGTK) form a disordered region.

It belongs to the transglycosylase family. Rpf subfamily. Glycosylated; by Pmt, by at least mannose and galactose. Other unidentified sugars may also be present. In terms of processing, may be subject to proteolytic cleavage as multiple shorter forms are detected in gels. Post-translationally, at least 3 non-glycosylated protein isoforms of 35, 40 and 42 kDa are seen in gels.

The protein localises to the secreted. Its subcellular location is the cell surface. Its function is as follows. Factor that stimulates resuscitation of dormant cells. Has peptidoglycan (PG) hydrolytic activity. Active in the pM concentration range. Has little to no effect on actively-growing cells. PG fragments could either directly activate the resuscitation pathway of dormant bacteria or serve as a substrate for endogenous Rpf, resulting in low molecular weight products with resuscitation activity. The chain is Resuscitation-promoting factor Rpf2 (rpf2) from Corynebacterium glutamicum (strain ATCC 13032 / DSM 20300 / JCM 1318 / BCRC 11384 / CCUG 27702 / LMG 3730 / NBRC 12168 / NCIMB 10025 / NRRL B-2784 / 534).